Reading from the N-terminus, the 529-residue chain is Glutamyl-tRNA reductase (529 aa).

Thr47 to Arg50 contacts substrate. Cys48 (nucleophile) is an active-site residue. The segment at Ser56 to Arg80 is disordered. Residues Pro62 to Pro73 show a composition bias toward pro residues. Substrate contacts are provided by residues Ser125, Glu130–Gln132, and Gln136. Gly205 to Ala210 is an NADP(+) binding site. The segment at Arg454–Arg505 is disordered. Over residues Arg464–Gly475 the composition is skewed to low complexity.

This sequence belongs to the glutamyl-tRNA reductase family. As to quaternary structure, homodimer.

The enzyme catalyses (S)-4-amino-5-oxopentanoate + tRNA(Glu) + NADP(+) = L-glutamyl-tRNA(Glu) + NADPH + H(+). Its pathway is porphyrin-containing compound metabolism; protoporphyrin-IX biosynthesis; 5-aminolevulinate from L-glutamyl-tRNA(Glu): step 1/2. Its function is as follows. Catalyzes the NADPH-dependent reduction of glutamyl-tRNA(Glu) to glutamate 1-semialdehyde (GSA). The chain is Glutamyl-tRNA reductase from Sorangium cellulosum (strain So ce56) (Polyangium cellulosum (strain So ce56)).